We begin with the raw amino-acid sequence, 146 residues long: Prolactin-inducible protein homolog (146 aa).

Residues 1-28 form the signal peptide; that stretch reads MRLFQLLFRASPATLLLVLCLQLGANKA. The residue at position 29 (glutamine 29) is a Pyrrolidone carboxylic acid. Cystine bridges form between cysteine 65–cysteine 91 and cysteine 89–cysteine 123. N-linked (GlcNAc...) asparagine glycosylation is present at asparagine 105.

It belongs to the PIP family. Monomer. Interacts with AZGP1.

It is found in the secreted. The polypeptide is Prolactin-inducible protein homolog (PIP) (Pan troglodytes (Chimpanzee)).